A 161-amino-acid chain; its full sequence is Nucleotide-binding protein Sama_2557 (161 aa).

This sequence belongs to the YajQ family.

In terms of biological role, nucleotide-binding protein. This Shewanella amazonensis (strain ATCC BAA-1098 / SB2B) protein is Nucleotide-binding protein Sama_2557.